Consider the following 493-residue polypeptide: Alpha-amylase-related protein (493 aa).

Residues 1 to 19 (MFKFALALTLCLAGSLSLA) form the signal peptide. Gln-20 carries the pyrrolidone carboxylic acid modification. Cys-47 and Cys-103 are joined by a disulfide. Positions 117, 168, and 177 each coordinate Ca(2+). A disulfide bridge links Cys-156 with Cys-170. Arg-205 provides a ligand contact to chloride. Asp-207 (nucleophile) is an active-site residue. His-211 contacts Ca(2+). The active-site Proton donor is Glu-244. Chloride is bound by residues Asn-307 and Arg-342. 3 disulfides stabilise this stretch: Cys-375/Cys-381, Cys-417/Cys-440, and Cys-447/Cys-459.

It belongs to the glycosyl hydrolase 13 family. As to quaternary structure, monomer. It depends on Ca(2+) as a cofactor. Chloride serves as cofactor.

It is found in the secreted. The enzyme catalyses Endohydrolysis of (1-&gt;4)-alpha-D-glucosidic linkages in polysaccharides containing three or more (1-&gt;4)-alpha-linked D-glucose units.. The polypeptide is Alpha-amylase-related protein (Amyrel) (Drosophila elegans (Fruit fly)).